The primary structure comprises 113 residues: UPF0482 protein KPK_2871 (113 aa).

The N-terminal stretch at 1 to 28 (MNMTLNKRWCLTAILALSAVVYTSSSFA) is a signal peptide. Positions 38-61 (GDSAQSRQQASMEKEQWNDTRSLR) are disordered. Polar residues predominate over residues 39–48 (DSAQSRQQAS). A compositionally biased stretch (basic and acidic residues) spans 49–59 (MEKEQWNDTRS).

The protein belongs to the UPF0482 family.

This chain is UPF0482 protein KPK_2871, found in Klebsiella pneumoniae (strain 342).